A 408-amino-acid chain; its full sequence is Peptidase T (408 aa).

His-78 contributes to the Zn(2+) binding site. Asp-80 is a catalytic residue. Position 141 (Asp-141) interacts with Zn(2+). Catalysis depends on Glu-175, which acts as the Proton acceptor. Zn(2+) is bound by residues Glu-176, Asp-198, and His-380.

This sequence belongs to the peptidase M20B family. Zn(2+) serves as cofactor.

Its subcellular location is the cytoplasm. It carries out the reaction Release of the N-terminal residue from a tripeptide.. Its function is as follows. Cleaves the N-terminal amino acid of tripeptides. In Halothermothrix orenii (strain H 168 / OCM 544 / DSM 9562), this protein is Peptidase T.